The sequence spans 612 residues: Dihydroxy-acid dehydratase (612 aa).

Asp81 is a binding site for Mg(2+). Residue Cys122 participates in [2Fe-2S] cluster binding. Residues Asp123 and Lys124 each coordinate Mg(2+). An N6-carboxylysine modification is found at Lys124. A [2Fe-2S] cluster-binding site is contributed by Cys195. Mg(2+) is bound at residue Glu491. The active-site Proton acceptor is the Ser517.

Belongs to the IlvD/Edd family. As to quaternary structure, homodimer. The cofactor is [2Fe-2S] cluster. Mg(2+) serves as cofactor.

It carries out the reaction (2R)-2,3-dihydroxy-3-methylbutanoate = 3-methyl-2-oxobutanoate + H2O. The enzyme catalyses (2R,3R)-2,3-dihydroxy-3-methylpentanoate = (S)-3-methyl-2-oxopentanoate + H2O. It functions in the pathway amino-acid biosynthesis; L-isoleucine biosynthesis; L-isoleucine from 2-oxobutanoate: step 3/4. The protein operates within amino-acid biosynthesis; L-valine biosynthesis; L-valine from pyruvate: step 3/4. Functions in the biosynthesis of branched-chain amino acids. Catalyzes the dehydration of (2R,3R)-2,3-dihydroxy-3-methylpentanoate (2,3-dihydroxy-3-methylvalerate) into 2-oxo-3-methylpentanoate (2-oxo-3-methylvalerate) and of (2R)-2,3-dihydroxy-3-methylbutanoate (2,3-dihydroxyisovalerate) into 2-oxo-3-methylbutanoate (2-oxoisovalerate), the penultimate precursor to L-isoleucine and L-valine, respectively. In Rhizobium etli (strain ATCC 51251 / DSM 11541 / JCM 21823 / NBRC 15573 / CFN 42), this protein is Dihydroxy-acid dehydratase.